A 109-amino-acid polypeptide reads, in one-letter code: Large ribosomal subunit protein uL18c (109 aa).

This sequence belongs to the universal ribosomal protein uL18 family. Part of the 50S ribosomal subunit; contacts the 5S rRNA.

It is found in the plastid. It localises to the chloroplast. In terms of biological role, binds 5S rRNA, forms part of the central protuberance of the 50S subunit. The sequence is that of Large ribosomal subunit protein uL18c (rpl18) from Cyanidioschyzon merolae (strain NIES-3377 / 10D) (Unicellular red alga).